The chain runs to 118 residues: Cytochrome b-c1 complex subunit 7 (118 aa).

The tract at residues 1–32 (MVHLTKTLRFINNPGFRKFYYGLQGYNKYGLY) is igE-binding. Immunodominant epitope; induces specific IgE antibody production in mice. Causes degranulation of rat basophilic leukemia (RBL) cells and the release of beta-hexosaminidase from them.

The protein belongs to the UQCRB/QCR7 family. As to quaternary structure, component of the ubiquinol-cytochrome c oxidoreductase (cytochrome b-c1 complex, complex III, CIII), a multisubunit enzyme composed of 3 respiratory subunits cytochrome b, cytochrome c1 and Rieske protein, 2 core protein subunits, and additional low-molecular weight protein subunits. The complex exists as an obligatory dimer and forms supercomplexes (SCs) in the inner mitochondrial membrane with cytochrome c oxidase (complex IV, CIV).

It is found in the mitochondrion inner membrane. Its function is as follows. Component of the ubiquinol-cytochrome c oxidoreductase, a multisubunit transmembrane complex that is part of the mitochondrial electron transport chain which drives oxidative phosphorylation. The respiratory chain contains 3 multisubunit complexes succinate dehydrogenase (complex II, CII), ubiquinol-cytochrome c oxidoreductase (cytochrome b-c1 complex, complex III, CIII) and cytochrome c oxidase (complex IV, CIV), that cooperate to transfer electrons derived from NADH and succinate to molecular oxygen, creating an electrochemical gradient over the inner membrane that drives transmembrane transport and the ATP synthase. The cytochrome b-c1 complex catalyzes electron transfer from ubiquinol to cytochrome c, linking this redox reaction to translocation of protons across the mitochondrial inner membrane, with protons being carried across the membrane as hydrogens on the quinol. In the process called Q cycle, 2 protons are consumed from the matrix, 4 protons are released into the intermembrane space and 2 electrons are passed to cytochrome c. The sequence is that of Cytochrome b-c1 complex subunit 7 from Dermatophagoides farinae (American house dust mite).